The following is a 273-amino-acid chain: Ribosomal RNA small subunit methyltransferase A (273 aa).

The S-adenosyl-L-methionine site is built by Asn18, Leu20, Gly45, Glu66, Asp91, and Asn113.

Belongs to the class I-like SAM-binding methyltransferase superfamily. rRNA adenine N(6)-methyltransferase family. RsmA subfamily.

The protein resides in the cytoplasm. The catalysed reaction is adenosine(1518)/adenosine(1519) in 16S rRNA + 4 S-adenosyl-L-methionine = N(6)-dimethyladenosine(1518)/N(6)-dimethyladenosine(1519) in 16S rRNA + 4 S-adenosyl-L-homocysteine + 4 H(+). Its function is as follows. Specifically dimethylates two adjacent adenosines (A1518 and A1519) in the loop of a conserved hairpin near the 3'-end of 16S rRNA in the 30S particle. May play a critical role in biogenesis of 30S subunits. This is Ribosomal RNA small subunit methyltransferase A from Salmonella schwarzengrund (strain CVM19633).